The sequence spans 388 residues: Ferrochelatase (388 aa).

Fe cation contacts are provided by His-196 and Glu-277.

The protein belongs to the ferrochelatase family.

It is found in the cytoplasm. It carries out the reaction heme b + 2 H(+) = protoporphyrin IX + Fe(2+). It participates in porphyrin-containing compound metabolism; protoheme biosynthesis; protoheme from protoporphyrin-IX: step 1/1. Its function is as follows. Catalyzes the ferrous insertion into protoporphyrin IX. The protein is Ferrochelatase of Nostoc sp. (strain PCC 7120 / SAG 25.82 / UTEX 2576).